The chain runs to 194 residues: Potassium-transporting ATPase KdpC subunit (194 aa).

The helical transmembrane segment at 12–34 (LFLLLLTGGVYPLLTTALGQWWF) threads the bilayer.

Belongs to the KdpC family. As to quaternary structure, the system is composed of three essential subunits: KdpA, KdpB and KdpC.

The protein resides in the cell inner membrane. Its function is as follows. Part of the high-affinity ATP-driven potassium transport (or Kdp) system, which catalyzes the hydrolysis of ATP coupled with the electrogenic transport of potassium into the cytoplasm. This subunit acts as a catalytic chaperone that increases the ATP-binding affinity of the ATP-hydrolyzing subunit KdpB by the formation of a transient KdpB/KdpC/ATP ternary complex. The polypeptide is Potassium-transporting ATPase KdpC subunit (Salmonella heidelberg (strain SL476)).